A 421-amino-acid polypeptide reads, in one-letter code: Testin (421 aa).

Residues 92–199 enclose the PET domain; sequence MILTNPVAAK…GDVKLPCEMD (108 aa). Residues 133–164 are disordered; sequence EKQPVAGSEGAQYRKKQLAKQLPAHDQDPSKC. Residues 155 to 164 are compositionally biased toward basic and acidic residues; it reads PAHDQDPSKC. LIM zinc-binding domains lie at 234–297, 299–359, and 362–421; these read YSCY…CDSE, PRCA…NHAV, and QGCH…KMMS.

It belongs to the prickle / espinas / testin family. In terms of assembly, interacts via LIM domain 1 with ZYX. Interacts (via LIM domain 3) with ENAH and VASP. Interacts with ALKBH4, talin, actin, alpha-actinin, GRIP1 and PXN. Interacts (via LIM domain 2) with ACTL7A (via N-terminus). Heterodimer with ACTL7A; the heterodimer interacts with ENAH to form a heterotrimer.

The protein resides in the cytoplasm. It is found in the cell junction. The protein localises to the focal adhesion. Its function is as follows. Scaffold protein that may play a role in cell adhesion, cell spreading and in the reorganization of the actin cytoskeleton. Plays a role in the regulation of cell proliferation. May act as a tumor suppressor. The sequence is that of Testin (TES) from Microcebus murinus (Gray mouse lemur).